Here is a 70-residue protein sequence, read N- to C-terminus: Mu-agatoxin-Ao1a (70 aa).

Residues 1-20 (MKAIIFFCFLSVMVFIVAEA) form the signal peptide. Residues 21–33 (SSLEALKIFEGER) constitute a propeptide that is removed on maturation. Cystine bridges form between cysteine 35–cysteine 50, cysteine 42–cysteine 55, cysteine 49–cysteine 65, and cysteine 57–cysteine 63. The residue at position 69 (asparagine 69) is an Asparagine amide.

This sequence belongs to the neurotoxin 07 (Beta/delta-agtx) family. 04 (aga-5) subfamily. In terms of tissue distribution, expressed by the venom gland.

The protein resides in the secreted. In terms of biological role, insecticidal neurotoxin that modulates the insect Nav channel (DmNaV1/tipE (para/tipE)) in a unique manner, with both the activation and inactivation processes being affected. The voltage dependence of activation is shifted toward more hyperpolarized potentials (analogous to site 4 toxins) and a non-inactivating persistent sodium current is induced (site 3-like action). Interestingly, both effects take place in a voltage-dependent manner, producing a bell-shaped curve between -80 and 0 mV. This is Mu-agatoxin-Ao1a from Agelena orientalis (Funnel-web spider).